Consider the following 235-residue polypeptide: Aspartate/glutamate leucyltransferase (235 aa).

It belongs to the R-transferase family. Bpt subfamily.

It localises to the cytoplasm. The catalysed reaction is N-terminal L-glutamyl-[protein] + L-leucyl-tRNA(Leu) = N-terminal L-leucyl-L-glutamyl-[protein] + tRNA(Leu) + H(+). The enzyme catalyses N-terminal L-aspartyl-[protein] + L-leucyl-tRNA(Leu) = N-terminal L-leucyl-L-aspartyl-[protein] + tRNA(Leu) + H(+). In terms of biological role, functions in the N-end rule pathway of protein degradation where it conjugates Leu from its aminoacyl-tRNA to the N-termini of proteins containing an N-terminal aspartate or glutamate. In Pseudomonas putida (strain ATCC 700007 / DSM 6899 / JCM 31910 / BCRC 17059 / LMG 24140 / F1), this protein is Aspartate/glutamate leucyltransferase.